Consider the following 741-residue polypeptide: MDSNTNENNSHASSNERQSSEGHDDYLNRNPNSEATEGEEGTHPTTGTQPVAFSIGTMFIITPQANFEGGENDPFANPFQPPVKRAVKEAWDSFEPLSNDQLMDLTCPICYDDMNENDEKQATKMPCGHIFGKNCLQKWLENHCTCPLCRKEVPHETVGSAHPPILFIIPHSHTLRGNQGNTAVSQENASNGVHSDFHPSEELNNANTDGRTGVDEPARQLHRIAFNRIRFILAPNRSATNTPVENTHPENPDSNTSTPTTRSEPLAGEGASIDAENASSRQETTPSDSRPSTLTSLFNAFFSSMPDRPSSNEPMTSNLTSNSGSMTNSTSTDLPTSNLPSQNAPARPVEPSPSIQPPNLLNLPTASPESTSWLPGSQTNIPANTNRSERPFTQLMTFHGLPSLADLPAVLESMFRPSGNNNLLNLNGIFHPDHNAQTENGQTLPENTDDTNSNATSAVPNLQNLNQQNAVTMGTNTPNNGSSPAVHPVIHIYLSRPPLQPAVSEQETPSEAVSREGTRSTDATMEDSSRPPSNGSFQGPGITHLSEMGQRILQRFQEEMENRMNQTRSESSTPAQQSAAGSSINVDTAGRQPSDEINIPGEYENSSEVAGSRNQTPTHSSIAVDTLSNVAVDQPAISTPSDVVGSDAGDTSKVSSGTSTPRMAAPIARRSNRHHPYSRPSSTRPQCQLEDQGICDPNDRFVHFECGHSVHERCQQSTSNSENQMDEEIGECPKCRNEEHK.

Over residues 1–17 (MDSNTNENNSHASSNER) the composition is skewed to polar residues. The segment at 1–50 (MDSNTNENNSHASSNERQSSEGHDDYLNRNPNSEATEGEEGTHPTTGTQP) is disordered. A compositionally biased stretch (basic and acidic residues) spans 18 to 27 (QSSEGHDDYL). Residues 107–150 (CPICYDDMNENDEKQATKMPCGHIFGKNCLQKWLENHCTCPLCR) form an RING-type 1; degenerate zinc finger. Composition is skewed to polar residues over residues 177–193 (GNQG…SNGV), 252–263 (PDSNTSTPTTRS), and 277–302 (NASS…NAFF). Disordered regions lie at residues 177 to 214 (GNQG…RTGV), 238 to 387 (SATN…NTNR), 500 to 543 (QPAV…PGIT), 561 to 619 (ENRM…TPTH), 638 to 688 (STPS…PQCQ), and 713 to 741 (RCQQ…EEHK). The segment covering 316-332 (TSNLTSNSGSMTNSTST) has biased composition (low complexity). 2 stretches are compositionally biased toward polar residues: residues 333–344 (DLPTSNLPSQNA) and 357–386 (PPNL…ANTN). Polar residues-rich tracts occupy residues 563–586 (RMNQ…SINV), 604–619 (ENSS…TPTH), and 652–661 (SKVSSGTSTP). The RING-type 2; degenerate zinc-finger motif lies at 687–736 (CQLEDQGICDPNDRFVHFECGHSVHERCQQSTSNSENQMDEEIGECPKCR). Basic and acidic residues predominate over residues 731-741 (ECPKCRNEEHK).

The protein resides in the nucleus. This is an uncharacterized protein from Schizosaccharomyces pombe (strain 972 / ATCC 24843) (Fission yeast).